The following is a 171-amino-acid chain: MTAILITGYRSFEIGIFDHKDPRVSIIKQAIRKDLIGYLENGVDWFIFTGNLGFEQWALEVANELKEEYPLQIATIFLFETHGDKWNEKNQEVLSQFKAVDFVKYYFPNYEQPTQFSQYYQFLLEKTEGAYVFYDTENETNLKYFLKKAKDMPHYQLLLLTFDRLNDMSQS.

Belongs to the UPF0398 family.

The chain is UPF0398 protein spyM18_1659 from Streptococcus pyogenes serotype M18 (strain MGAS8232).